We begin with the raw amino-acid sequence, 213 residues long: Ribosomal RNA small subunit methyltransferase G (213 aa).

Residues G72, F77, 125–126, and R141 contribute to the S-adenosyl-L-methionine site; that span reads IE.

It belongs to the methyltransferase superfamily. RNA methyltransferase RsmG family.

The protein localises to the cytoplasm. It catalyses the reaction guanosine(527) in 16S rRNA + S-adenosyl-L-methionine = N(7)-methylguanosine(527) in 16S rRNA + S-adenosyl-L-homocysteine. Its function is as follows. Specifically methylates the N7 position of guanine in position 527 of 16S rRNA. The protein is Ribosomal RNA small subunit methyltransferase G of Rhizobium meliloti (strain 1021) (Ensifer meliloti).